Reading from the N-terminus, the 423-residue chain is Serine--tRNA ligase (423 aa).

228–230 (TSE) contributes to the L-serine binding site. Position 259–261 (259–261 (RLE)) interacts with ATP. E282 lines the L-serine pocket. 346 to 349 (EISS) provides a ligand contact to ATP. S384 lines the L-serine pocket.

It belongs to the class-II aminoacyl-tRNA synthetase family. Type-1 seryl-tRNA synthetase subfamily. Homodimer. The tRNA molecule binds across the dimer.

It is found in the cytoplasm. It catalyses the reaction tRNA(Ser) + L-serine + ATP = L-seryl-tRNA(Ser) + AMP + diphosphate + H(+). The enzyme catalyses tRNA(Sec) + L-serine + ATP = L-seryl-tRNA(Sec) + AMP + diphosphate + H(+). Its pathway is aminoacyl-tRNA biosynthesis; selenocysteinyl-tRNA(Sec) biosynthesis; L-seryl-tRNA(Sec) from L-serine and tRNA(Sec): step 1/1. Its function is as follows. Catalyzes the attachment of serine to tRNA(Ser). Is also able to aminoacylate tRNA(Sec) with serine, to form the misacylated tRNA L-seryl-tRNA(Sec), which will be further converted into selenocysteinyl-tRNA(Sec). In Ehrlichia canis (strain Jake), this protein is Serine--tRNA ligase.